A 149-amino-acid polypeptide reads, in one-letter code: SsrA-binding protein (149 aa).

A disordered region spans residues 121–149; sequence GKGEHDKRDTIKDREGKREVERAMKSRSR.

It belongs to the SmpB family.

It localises to the cytoplasm. In terms of biological role, required for rescue of stalled ribosomes mediated by trans-translation. Binds to transfer-messenger RNA (tmRNA), required for stable association of tmRNA with ribosomes. tmRNA and SmpB together mimic tRNA shape, replacing the anticodon stem-loop with SmpB. tmRNA is encoded by the ssrA gene; the 2 termini fold to resemble tRNA(Ala) and it encodes a 'tag peptide', a short internal open reading frame. During trans-translation Ala-aminoacylated tmRNA acts like a tRNA, entering the A-site of stalled ribosomes, displacing the stalled mRNA. The ribosome then switches to translate the ORF on the tmRNA; the nascent peptide is terminated with the 'tag peptide' encoded by the tmRNA and targeted for degradation. The ribosome is freed to recommence translation, which seems to be the essential function of trans-translation. In Polaromonas sp. (strain JS666 / ATCC BAA-500), this protein is SsrA-binding protein.